Here is a 499-residue protein sequence, read N- to C-terminus: Lysine--tRNA ligase (499 aa).

The Mg(2+) site is built by glutamate 408 and glutamate 415.

Belongs to the class-II aminoacyl-tRNA synthetase family. As to quaternary structure, homodimer. Mg(2+) serves as cofactor.

The protein localises to the cytoplasm. It catalyses the reaction tRNA(Lys) + L-lysine + ATP = L-lysyl-tRNA(Lys) + AMP + diphosphate. This Bacillus cereus (strain ATCC 10987 / NRS 248) protein is Lysine--tRNA ligase.